The chain runs to 172 residues: Stellate protein CG33243 (172 aa).

This sequence belongs to the casein kinase 2 subunit beta family. Interacts in vitro with the casein kinase 2 alpha subunit (CkII-alpha). The relevance of such interaction is however unclear in vivo. Probably not expressed in wild-type flies. In males lacking the Y chromosome, it is testis-specific and constitutes the main component of star-shaped crystals.

Functionally, unknown. In males lacking the Y chromosome, its strong overexpression leads to the appearance of proteinaceous star-shaped crystals in the primary spermatocytes causing meiotic drive, possibly by interfering with normal casein kinase 2 activity. The chain is Stellate protein CG33243 (Ste:CG33243) from Drosophila melanogaster (Fruit fly).